A 182-amino-acid chain; its full sequence is Ribosome-recycling factor (182 aa).

This sequence belongs to the RRF family.

Its subcellular location is the cytoplasm. Functionally, responsible for the release of ribosomes from messenger RNA at the termination of protein biosynthesis. May increase the efficiency of translation by recycling ribosomes from one round of translation to another. This is Ribosome-recycling factor from Synechocystis sp. (strain ATCC 27184 / PCC 6803 / Kazusa).